Reading from the N-terminus, the 421-residue chain is Testin (421 aa).

Residues 92–199 enclose the PET domain; sequence MILTNPVAAK…GDVKLPCEMD (108 aa). The disordered stretch occupies residues 133–164; that stretch reads EKQPVAGSEGAQYRKKQLAKQLPAHDQDPSKC. Positions 155–164 are enriched in basic and acidic residues; sequence PAHDQDPSKC. 3 consecutive LIM zinc-binding domains span residues 234 to 297, 299 to 359, and 362 to 421; these read YSCY…CDSE, PRCA…NHAV, and QGCH…KRMS.

The protein belongs to the prickle / espinas / testin family. Interacts via LIM domain 1 with ZYX. Interacts (via LIM domain 3) with ENAH and VASP. Interacts with ALKBH4, talin, actin, alpha-actinin, GRIP1 and PXN. Interacts (via LIM domain 2) with ACTL7A (via N-terminus). Heterodimer with ACTL7A; the heterodimer interacts with ENAH to form a heterotrimer.

It is found in the cytoplasm. Its subcellular location is the cell junction. The protein resides in the focal adhesion. Functionally, scaffold protein that may play a role in cell adhesion, cell spreading and in the reorganization of the actin cytoskeleton. Plays a role in the regulation of cell proliferation. May act as a tumor suppressor. This chain is Testin (TES), found in Pan troglodytes (Chimpanzee).